The sequence spans 531 residues: Flavin-containing monooxygenase 3 (531 aa).

FAD-binding positions include 9 to 13, E32, 40 to 41, and 61 to 62; these read GAGVS, LW, and NS. Residues 60 to 61 and 195 to 198 contribute to the NADP(+) site; these read TN and SGCD. At S401 the chain carries Phosphoserine. The helical transmembrane segment at 511–531 threads the bilayer; it reads YSHFLRLLAVPVLIALFLVLI.

It belongs to the FMO family. FAD is required as a cofactor. Detected in liver and kidney (at protein level). Expressed in kidney and liver. Weakly expressed in lung. Does not seem to be expressed in brain, adipose tissue, or muscle.

It is found in the microsome membrane. The protein resides in the endoplasmic reticulum membrane. It carries out the reaction trimethylamine + NADPH + O2 = trimethylamine N-oxide + NADP(+) + H2O. It catalyses the reaction N,N-dimethylaniline + NADPH + O2 + H(+) = N,N-dimethylaniline N-oxide + NADP(+) + H2O. The catalysed reaction is hypotaurine + NADPH + O2 + H(+) = taurine + NADP(+) + H2O. The enzyme catalyses (S)-nicotine + NADPH + O2 = trans-(S)-nicotine N(1')-oxide + NADP(+) + H2O. It carries out the reaction albendazole + NADPH + O2 + H(+) = albendazole S-oxide + NADP(+) + H2O. Functionally, essential hepatic enzyme that catalyzes the oxygenation of a wide variety of nitrogen- and sulfur-containing compounds including drugs as well as dietary compounds. Plays an important role in the metabolism of trimethylamine (TMA), via the production of trimethylamine N-oxide (TMAO) metabolite. TMA is generated by the action of gut microbiota using dietary precursors such as choline, choline containing compounds, betaine or L-carnitine. By regulating TMAO concentration, FMO3 directly impacts both platelet responsiveness and rate of thrombus formation. The protein is Flavin-containing monooxygenase 3 (Fmo3) of Rattus norvegicus (Rat).